Reading from the N-terminus, the 249-residue chain is Cobalt transport protein CbiM (249 aa).

A signal peptide spans 1–27 (MKPLHRWLPVVIGAALLIIFESRAAYA). A run of 6 helical transmembrane segments spans residues 33–53 (GFLPPVWAGFWFIVVLPFWVL), 70–90 (LLLGFAAAFAFVLSALKIPSV), 102–122 (LGTILFGPLVMSVLGSIVLLF), 134–154 (TLGANAFSMAVVGPFVAWLIW), 161–181 (APIWLTVFLAAALADLFTYVV), and 207–227 (IFAVTQIPLAISEGILTVLIF).

The protein belongs to the CbiM family. As to quaternary structure, forms an energy-coupling factor (ECF) transporter complex composed of an ATP-binding protein (A component, CbiO), a transmembrane protein (T component, CbiQ) and 2 possible substrate-capture proteins (S components, CbiM and CbiN) of unknown stoichimetry.

It is found in the cell membrane. Its pathway is cofactor biosynthesis; adenosylcobalamin biosynthesis. In terms of biological role, part of the energy-coupling factor (ECF) transporter complex CbiMNOQ involved in cobalt import. This is Cobalt transport protein CbiM from Roseiflexus sp. (strain RS-1).